The sequence spans 119 residues: Large ribosomal subunit protein bL20 (119 aa).

The protein belongs to the bacterial ribosomal protein bL20 family.

In terms of biological role, binds directly to 23S ribosomal RNA and is necessary for the in vitro assembly process of the 50S ribosomal subunit. It is not involved in the protein synthesizing functions of that subunit. The protein is Large ribosomal subunit protein bL20 of Alkalilimnicola ehrlichii (strain ATCC BAA-1101 / DSM 17681 / MLHE-1).